The following is a 495-amino-acid chain: Cytochrome P450 monooxygenase FrzC (495 aa).

Residues 8 to 28 (GLVVGLWVTYHILLGTYNVFF) form a helical membrane-spanning segment. C437 provides a ligand contact to heme.

It belongs to the cytochrome P450 family. Heme serves as cofactor.

Its subcellular location is the membrane. It catalyses the reaction (S,S)-2,5-di-(p-hydroxybenzyl)piperazine + reduced [NADPH--hemoprotein reductase] + O2 = (1S,4S)-4-[(4-hydroxyphenyl)methyl]-2,5-diazaspiro[bicyclo[3.2.1]octane-6,1'-cyclohexane]-2',5'-dien-4'-one + oxidized [NADPH--hemoprotein reductase] + 2 H2O + H(+). The protein operates within secondary metabolite biosynthesis. Cytochrome P450 monooxygenase; part of the gene cluster that mediates the biosynthesis of the alkaloid (-)-FR901483, a potent immunosuppressant that shows efficacy in animal models and a probable inhibitor of purine nucleotide biosynthesis by targeting phosphoribosylpyrophosphate amidotransferase (PPAT). Within the pathway, FrzC catalyzes the coupling between N10 and C1' to produce a 1,4-diazabicyclo[3.2.1]octane spiro-fused to a 2,5-cyclohexadienone. FrzC probably first catalyzes homolysis of the N-H bond to generate the N10 radical which is followed by an O-H abstraction to give the phenolic radical which can be delocalized to C1'. Radical coupling between N10 and C1' then forms. The biosynthesis of (-)-FR901483 starts with the condensation of two L-tyrosines to yield (S,S)-dityrosyl-piperazine. This process occurs in 3 steps with the non-canonical nonribosomal peptide synthetase FrzA catalyzing the reduction of L-tyrosine into L-tyrosinal, the spontaneous condensation of 2 L-tyrosinal units, and the subsequent reduction by the NmrA-like family domain-containing oxidoreductase FrzB. The cytochrome P450 monooxygenase FrzC then performs coupling between N10 and C1' to morph the piperazine into a 1,4-diazabicyclo[3.2.1]octane spiro-fused to a 2,5-cyclohexadienone. The dienone portion is further reduced to cyclohexanone by the flavin-dependent reductase FrzD. The methyltranserases (MTs) FrzE and FrzF are then involved in the methylation at the C10' amine and the C4 phenolic oxygen, respectively. The order of the two MTs appear to be interchangeable. Cleavage of the C9-N10' bond by the dioxygenase FrzG then leads to formation of a conjugated iminium. In addition to the oxidation of C9, an additional dehydrogenation between C7 and C8 can occur to give a likely shunt product. The next biosynthetic step is the intramolecular aldol condensation catalyzed by the newly identified aldolase FrzH to yield an aza-tricyclic product with the formation of a C9-C3' bond. The short-chain dehydrogenase/reductase FrzI then produces dephospho-(-)-FR901483 that is phosphorylated at C4'-OH into (-)-FR901483 by the phosphotransferase FrzJ. This is Cytochrome P450 monooxygenase FrzC from Cladobotryum sp.